The primary structure comprises 272 residues: Phosphoribosylformylglycinamidine synthase subunit PurQ (272 aa).

Positions 8-272 (VLVMSGYGIN…FKNAVEYFNK (265 aa)) constitute a Glutamine amidotransferase type-1 domain. C98 functions as the Nucleophile in the catalytic mechanism. Residues H225, E227, and E235 contribute to the active site.

In terms of assembly, part of the FGAM synthase complex composed of 1 PurL, 1 PurQ and 2 PurS subunits.

The protein resides in the cytoplasm. The catalysed reaction is N(2)-formyl-N(1)-(5-phospho-beta-D-ribosyl)glycinamide + L-glutamine + ATP + H2O = 2-formamido-N(1)-(5-O-phospho-beta-D-ribosyl)acetamidine + L-glutamate + ADP + phosphate + H(+). It carries out the reaction L-glutamine + H2O = L-glutamate + NH4(+). The protein operates within purine metabolism; IMP biosynthesis via de novo pathway; 5-amino-1-(5-phospho-D-ribosyl)imidazole from N(2)-formyl-N(1)-(5-phospho-D-ribosyl)glycinamide: step 1/2. Functionally, part of the phosphoribosylformylglycinamidine synthase complex involved in the purines biosynthetic pathway. Catalyzes the ATP-dependent conversion of formylglycinamide ribonucleotide (FGAR) and glutamine to yield formylglycinamidine ribonucleotide (FGAM) and glutamate. The FGAM synthase complex is composed of three subunits. PurQ produces an ammonia molecule by converting glutamine to glutamate. PurL transfers the ammonia molecule to FGAR to form FGAM in an ATP-dependent manner. PurS interacts with PurQ and PurL and is thought to assist in the transfer of the ammonia molecule from PurQ to PurL. This Methanococcus maripaludis (strain DSM 14266 / JCM 13030 / NBRC 101832 / S2 / LL) protein is Phosphoribosylformylglycinamidine synthase subunit PurQ.